We begin with the raw amino-acid sequence, 225 residues long: Ribosomal RNA small subunit methyltransferase G (225 aa).

S-adenosyl-L-methionine is bound by residues glycine 71, leucine 76, 121-122 (AE), and arginine 139. Positions 204-225 (VVEARRATPSNGRGRPGRSSRR) are disordered.

It belongs to the methyltransferase superfamily. RNA methyltransferase RsmG family.

It is found in the cytoplasm. Specifically methylates the N7 position of guanine in position 518 of 16S rRNA. The chain is Ribosomal RNA small subunit methyltransferase G from Mycobacterium sp. (strain KMS).